The primary structure comprises 186 residues: MLALINRLLDWFKSLFWKEEMELTLVGLQYSGKTTFVNVIASGQFSEDMIPTVGFNMRKVTKGNVTIKIWDIGGQPRFRSMWERYCRGVNAIVYMVDAADREKVEASRNELHNLLDKPQLQGIPVLVLGNKRDLPNALDEKQLIEKMNLAAIQDREICCYSISCKEKDNIDITLQWLIQHSKSRRS.

Positions 1–19 form an intramembrane region, note=Mediates targeting to membranes; sequence MLALINRLLDWFKSLFWKE. GTP contacts are provided by residues 29 to 35, 71 to 75, and 130 to 133; these read QYSGKTT, DIGGQ, and NKRD.

It belongs to the small GTPase superfamily. Arf family.

Its subcellular location is the late endosome membrane. It is found in the lysosome membrane. It localises to the cytoplasm. The protein localises to the cytoskeleton. The protein resides in the spindle. Its subcellular location is the early endosome membrane. Its function is as follows. Small GTPase which cycles between active GTP-bound and inactive GDP-bound states. In its active state, binds to a variety of effector proteins playing a key role in the regulation of lysosomal positioning which is important for nutrient sensing, natural killer cell-mediated cytotoxicity and antigen presentation. Along with its effectors, orchestrates lysosomal transport and fusion. The polypeptide is ADP-ribosylation factor-like protein 8B-A (arl8ba) (Danio rerio (Zebrafish)).